We begin with the raw amino-acid sequence, 386 residues long: N-acetylneuraminate epimerase (386 aa).

Residues 1–29 (MGMQMKNSKKMMTLMALCLSVAITTSGYA) form the signal peptide. 7 Kelch repeats span residues 51–95 (VIYV…VFLN), 97–149 (ELYV…VKLN), 151–186 (TMAL…RVIY), 187–232 (NYFN…AMEN), 235–284 (LTLI…LAGA), 306–355 (QNYT…NYGD), and 357–386 (IFLI…LLIE). Glu-241 functions as the Proton acceptor in the catalytic mechanism.

The protein belongs to the NanM family. In terms of assembly, homodimer.

The protein localises to the periplasm. It catalyses the reaction N-acetyl-alpha-neuraminate = N-acetyl-beta-neuraminate. Functionally, converts alpha-N-acetylneuranimic acid (Neu5Ac) to the beta-anomer, accelerating the equilibrium between the alpha- and beta-anomers. Probably facilitates sialidase-negative bacteria to compete successfully for limited amounts of extracellular Neu5Ac, which is likely taken up in the beta-anomer. In addition, the rapid removal of sialic acid from solution might be advantageous to the bacterium to damp down host responses. The chain is N-acetylneuraminate epimerase from Salmonella arizonae (strain ATCC BAA-731 / CDC346-86 / RSK2980).